We begin with the raw amino-acid sequence, 362 residues long: MPNFEQNQVIAVGLSGGVDSSVAALVLKEKGYEVIGLFMQNWETDSKDPFCTAEQDLSDAKAIADHIGIPLYVVNFSKAYWNHVFQHCLDEFAQGRTPNPDVWCNREIKFKSLLDHAKKLGATHLATGHYACIQNENNEYRLLKSNDSHKDQSYFLHLLNQYQLANSVFPIGGYQKSEVRAIAKKRGFINHAKKDSTGICFIGERKFKDFLNEFLLAQPGNIETPEGKIIGKHDGIMFYTVGQRKGLHIGGRPDAGEAPWYVVDKDVKRNVLIVVQGYEHPLLYSQELTCTNLHWIRDTEPSFPLTCKAKTRCRQADQTCVVTRLDNDHCHVQFEHPQRAITRGQSVVFYLGNECLGGGIIN.

ATP-binding positions include 13–20 (GLSGGVDS) and methionine 39. Positions 99–101 (NPD) are interaction with target base in tRNA. Residue cysteine 104 is the Nucleophile of the active site. Cysteine 104 and cysteine 200 are joined by a disulfide. Glycine 128 provides a ligand contact to ATP. Residues 150 to 152 (KDQ) are interaction with tRNA. Cysteine 200 acts as the Cysteine persulfide intermediate in catalysis.

It belongs to the MnmA/TRMU family.

It localises to the cytoplasm. It carries out the reaction S-sulfanyl-L-cysteinyl-[protein] + uridine(34) in tRNA + AH2 + ATP = 2-thiouridine(34) in tRNA + L-cysteinyl-[protein] + A + AMP + diphosphate + H(+). Catalyzes the 2-thiolation of uridine at the wobble position (U34) of tRNA, leading to the formation of s(2)U34. In Coxiella burnetii (strain Dugway 5J108-111), this protein is tRNA-specific 2-thiouridylase MnmA.